The sequence spans 261 residues: Uridine-cytidine kinase 2 (261 aa).

Residues 1–16 (MAGDSEQTLQNHQQPN) are compositionally biased toward polar residues. Positions 1–24 (MAGDSEQTLQNHQQPNGGEPFLIG) are disordered. N-acetylalanine is present on alanine 2. 27-35 (GGTASGKSS) is a binding site for ATP. Residues aspartate 84, tyrosine 112, histidine 117, arginine 166, arginine 176, and glutamine 184 each coordinate substrate. Aspartate 213 contributes to the ATP binding site. Positions 240–261 (GYLNGYTPSRKRQASESSSRPH) are disordered. Serine 254 is subject to Phosphoserine.

This sequence belongs to the uridine kinase family. In terms of assembly, homotetramer.

The catalysed reaction is uridine + ATP = UMP + ADP + H(+). The enzyme catalyses cytidine + ATP = CMP + ADP + H(+). Its pathway is pyrimidine metabolism; CTP biosynthesis via salvage pathway; CTP from cytidine: step 1/3. It participates in pyrimidine metabolism; UMP biosynthesis via salvage pathway; UMP from uridine: step 1/1. Its function is as follows. Phosphorylates uridine and cytidine to uridine monophosphate and cytidine monophosphate. Does not phosphorylate deoxyribonucleosides or purine ribonucleosides. Can use ATP or GTP as a phosphate donor. This Mus musculus (Mouse) protein is Uridine-cytidine kinase 2 (Uck2).